A 469-amino-acid chain; its full sequence is MPNVLVISNRLPVTISREEDGTYKYTMSSGGLVTALSGLKQSTTFQWFGWPGLEIPEKDKPRLINDLETMFSCVPVFMDDDLADLHYNGFSNSILWPLFHYHPGEMNFDQVAWEAYTQANRLFAKKVASIVKPGDIVWVHDYHLMLLPEMLREECENNSALDGLKIGFFLHTPFPSSEIYRILPVRKEVLTGVLSCNLIGFHTYDYARHFLSSVSRILDLETMPNGTYYKGRHVVVGAFPIGIDVNKFLEGCKRPAVQERIAQLQDKFKGIKVVVGVDRLDYIKGVPQKLHAFEVFLSEHPEWIGKVVLVQVAVPSRGLVEEYQNLRAVVNELVGRINGMFGTVEFTPIHFMHRSVDFNELIALYSISDVCFVSSTRDGMNLVSYEYVACQTEKHGSLILSEFTGAAQSLNGALIVNPWNTEDMAEALYDSLTFSPEKKAENHRKLFKYVSKYTSQHWGEAFVSELKRC.

D-glucose 6-phosphate is bound by residues Tyr87 and Asp141. Arg279 and Lys284 together coordinate UDP. 2 residues coordinate UDP-alpha-D-glucose: Arg279 and Lys284. Residue Arg317 coordinates D-glucose 6-phosphate. Residue 378–386 (DGMNLVSYE) participates in UDP-alpha-D-glucose binding. 382 to 386 (LVSYE) lines the UDP pocket.

The protein belongs to the glycosyltransferase 20 family.

It catalyses the reaction D-glucose 6-phosphate + UDP-alpha-D-glucose = alpha,alpha-trehalose 6-phosphate + UDP + H(+). The protein operates within carbohydrate biosynthesis. In terms of biological role, synthase catalytic subunit of the trehalose synthase complex that catalyzes the production of trehalose from glucose-6-phosphate and UDP-alpha-D-glucose in a two step process. The disaccharide trehalose serves as a storage carbohydrate that is mobilized during spore germination. This is Alpha,alpha-trehalose-phosphate synthase [UDP-forming] from Yarrowia lipolytica (strain CLIB 122 / E 150) (Yeast).